A 140-amino-acid polypeptide reads, in one-letter code: Large ribosomal subunit protein uL16 (140 aa).

The protein belongs to the universal ribosomal protein uL16 family. As to quaternary structure, part of the 50S ribosomal subunit.

Functionally, binds 23S rRNA and is also seen to make contacts with the A and possibly P site tRNAs. This chain is Large ribosomal subunit protein uL16, found in Trichlorobacter lovleyi (strain ATCC BAA-1151 / DSM 17278 / SZ) (Geobacter lovleyi).